Reading from the N-terminus, the 181-residue chain is Protein Syd (181 aa).

The protein belongs to the Syd family.

The protein resides in the cell inner membrane. In terms of biological role, interacts with the SecY protein in vivo. May bind preferentially to an uncomplexed state of SecY, thus functioning either as a chelating agent for excess SecY in the cell or as a regulatory factor that negatively controls the translocase function. The chain is Protein Syd from Escherichia coli (strain K12 / DH10B).